Reading from the N-terminus, the 398-residue chain is Tyrosine--tRNA ligase (398 aa).

Positions 42–51 match the 'HIGH' region motif; sequence PTAPDIHLGH. A 'KMSKS' region motif is present at residues 226-230; it reads KMSKS. Lysine 229 contributes to the ATP binding site. Residues 336–397 form the S4 RNA-binding domain; that stretch reads LAIANLLKDA…GKRKFAKVTL (62 aa).

This sequence belongs to the class-I aminoacyl-tRNA synthetase family. TyrS type 2 subfamily. In terms of assembly, homodimer.

The protein resides in the cytoplasm. The catalysed reaction is tRNA(Tyr) + L-tyrosine + ATP = L-tyrosyl-tRNA(Tyr) + AMP + diphosphate + H(+). Its function is as follows. Catalyzes the attachment of tyrosine to tRNA(Tyr) in a two-step reaction: tyrosine is first activated by ATP to form Tyr-AMP and then transferred to the acceptor end of tRNA(Tyr). The protein is Tyrosine--tRNA ligase of Shewanella oneidensis (strain ATCC 700550 / JCM 31522 / CIP 106686 / LMG 19005 / NCIMB 14063 / MR-1).